The chain runs to 149 residues: Transcriptional regulator MraZ (149 aa).

2 SpoVT-AbrB domains span residues 7–54 (KYVN…GISH) and 83–126 (AVQL…QPQN).

It belongs to the MraZ family. As to quaternary structure, forms oligomers.

The protein resides in the cytoplasm. It is found in the nucleoid. This is Transcriptional regulator MraZ from Rickettsia akari (strain Hartford).